Here is a 695-residue protein sequence, read N- to C-terminus: DNA ligase (695 aa).

NAD(+)-binding positions include 36–40 (DADYD), 85–86 (SL), and Glu-123. The active-site N6-AMP-lysine intermediate is the Lys-125. Residues Arg-146, Glu-182, Lys-318, and Lys-342 each coordinate NAD(+). Zn(2+)-binding residues include Cys-436, Cys-439, Cys-454, and Cys-460. The region spanning 617–695 (LQSGDLAGKT…EDGLKALLSQ (79 aa)) is the BRCT domain.

It belongs to the NAD-dependent DNA ligase family. LigA subfamily. It depends on Mg(2+) as a cofactor. Mn(2+) is required as a cofactor.

It carries out the reaction NAD(+) + (deoxyribonucleotide)n-3'-hydroxyl + 5'-phospho-(deoxyribonucleotide)m = (deoxyribonucleotide)n+m + AMP + beta-nicotinamide D-nucleotide.. Functionally, DNA ligase that catalyzes the formation of phosphodiester linkages between 5'-phosphoryl and 3'-hydroxyl groups in double-stranded DNA using NAD as a coenzyme and as the energy source for the reaction. It is essential for DNA replication and repair of damaged DNA. The protein is DNA ligase of Bordetella avium (strain 197N).